Reading from the N-terminus, the 100-residue chain is Proline-rich protein 15-like protein (100 aa).

The tract at residues 29 to 51 (YAQTEGGAEPPGPDAGDPHSDFN) is disordered.

Belongs to the PRR15 family.

This is Proline-rich protein 15-like protein (Prr15l) from Mus musculus (Mouse).